A 615-amino-acid polypeptide reads, in one-letter code: MAMNKDKPWTLYLLAVGLAVLAAVQFGLFSQPAVQAIPYSQFLQLLDQQKVSDLHIEHERILGRLQEPIDGHSVFSTVRVDPALSEQLGRSGVAFSGVVEDNTVATVMGALMPLLMLLALWYFLFHGLGQKQGLGGLMGVGKSRARVYVEHDTQVTFADVAGIDDVKGELTEIVSFLKNKAWYARLGAHVPKGTLLVGPPGTGKTLVAKAIAGEAAVPFFSISGSEFVEMFVGVGAARVRDLFDQARQAAPCIIFIDELDALGKMRGVGSFGGNDEKEQTLNQLLAELDGFDPREGVVLLAATNRPEVLDPALLRAGRFDRQILIDRPDRKGRLAILKVHLHKIIYKNDLDCERIAEITPGLTGADLANLVNEAAIVATRRSSQWVELQDFTAAVERLVAGIERKGSVLRSDERQVVAYHEMGHALAASSLPAMDPVHKVSIIPRAAGSLGYTLQRPTDDRYLISTQMLRDRLVVLMAGRAAEHLVFGQVSTGAADDLGRATDIARQLVTRFGMSPVLGQAVLERQQAGYLGDSLLRQERKDYSEQTAREIDLAVRGLLEEAYGRARALLEQRRDDLDAGARLLLAKETITPEEFPALQPQANEPATYVLVDATK.

At methionine 1–proline 8 the chain is on the cytoplasmic side. A helical transmembrane segment spans residues tryptophan 9–phenylalanine 29. The Periplasmic portion of the chain corresponds to serine 30 to valine 104. A helical membrane pass occupies residues alanine 105–phenylalanine 125. Over histidine 126 to lysine 615 the chain is Cytoplasmic. Residue glycine 198–threonine 205 coordinates ATP. Histidine 420 provides a ligand contact to Zn(2+). Glutamate 421 is an active-site residue. Positions 424 and 497 each coordinate Zn(2+).

This sequence in the central section; belongs to the AAA ATPase family. The protein in the C-terminal section; belongs to the peptidase M41 family. As to quaternary structure, homohexamer. Requires Zn(2+) as cofactor.

It is found in the cell inner membrane. Its function is as follows. Acts as a processive, ATP-dependent zinc metallopeptidase for both cytoplasmic and membrane proteins. Plays a role in the quality control of integral membrane proteins. This Pseudomonas putida (strain ATCC 700007 / DSM 6899 / JCM 31910 / BCRC 17059 / LMG 24140 / F1) protein is ATP-dependent zinc metalloprotease FtsH.